The following is a 276-amino-acid chain: F-box/LRR-repeat protein 20 (276 aa).

The 47-residue stretch at 22-68 (AVINKKLPKELLLRIFSFLDVVTLCRCAQVSRAWNVLALDGSNWQRI) folds into the F-box domain. LRR repeat units follow at residues 74–100 (QRDI…SLRG), 101–126 (CLGV…SLNG), 127–152 (CTKT…DLAS), 153–178 (CTSI…NISW), 179–204 (CDQV…FLKG), 205–230 (CTQL…NLQT), 231–256 (CLQI…CASG), and 257–276 (CSNI…PRLR).

As to quaternary structure, interacts with SKP1 and CUL1. As to expression, widely expressed, with highest expression in skeletal muscle, heart and brain.

Its subcellular location is the cytoplasm. Substrate-recognition component of the SCF (SKP1-CUL1-F-box protein)-type E3 ubiquitin ligase complex. Role in neural transmission. This is F-box/LRR-repeat protein 20 (Fbxl20) from Rattus norvegicus (Rat).